The chain runs to 101 residues: Large ribosomal subunit protein bL21 (101 aa).

The protein belongs to the bacterial ribosomal protein bL21 family. Part of the 50S ribosomal subunit. Contacts protein L20.

Functionally, this protein binds to 23S rRNA in the presence of protein L20. This chain is Large ribosomal subunit protein bL21, found in Sulfurovum sp. (strain NBC37-1).